Here is a 123-residue protein sequence, read N- to C-terminus: Ribosome-binding factor A (123 aa).

It belongs to the RbfA family. Monomer. Binds 30S ribosomal subunits, but not 50S ribosomal subunits or 70S ribosomes.

It is found in the cytoplasm. Its function is as follows. One of several proteins that assist in the late maturation steps of the functional core of the 30S ribosomal subunit. Associates with free 30S ribosomal subunits (but not with 30S subunits that are part of 70S ribosomes or polysomes). Required for efficient processing of 16S rRNA. May interact with the 5'-terminal helix region of 16S rRNA. The protein is Ribosome-binding factor A of Desulfatibacillum aliphaticivorans.